A 487-amino-acid polypeptide reads, in one-letter code: MRLTPNYDYEVSSIDKKKRGYIVQIIGPVLDVPFSPGMXPSIYNALVVQGRHKQEPNVTCEVQQLLGNNRVRAVAMSDTDGLMRGMEVIDTGTPISVPVGGSTLGRIFNVLGEPVDQLGPVETNQLSPIHRSAPPFLKLDTRLSIFETGIKVVDLLAPYRRGGKVGLFGGAGVGKTVLIMELINNIAKAYGGVSVFGGVGERTREGNDLYMEMKESGVINQQKLAESKVALVYGQMNEPPGARMRVGLTALTMAEYFRDVNRQDVLLFIDNIFRFVQAGSEVSALLGRMPSAVGYQPTLSTEMGSLQERITSTKEGSITSIQAVYVPADDLTDPAPATTFAHLDATTVLSRSLAAKGIYPAVDPLDSTSMMLQPQIVGKQHYKTAQRVKQTLQRYKELQDIIAILGLDELSDDDRLTVARARKIERFLSQPFFVAEIFTGSPGKYVSLAETIRGCTLILSGEFDDLPEQAFYLVGTIDEVNAKAMLE.

169–176 (GGAGVGKT) contacts ATP.

It belongs to the ATPase alpha/beta chains family. As to quaternary structure, F-type ATPases have 2 components, CF(1) - the catalytic core - and CF(0) - the membrane proton channel. CF(1) has five subunits: alpha(3), beta(3), gamma(1), delta(1), epsilon(1). CF(0) has four main subunits: a(1), b(1), b'(1) and c(9-12).

Its subcellular location is the plastid membrane. The catalysed reaction is ATP + H2O + 4 H(+)(in) = ADP + phosphate + 5 H(+)(out). Its function is as follows. Produces ATP from ADP in the presence of a proton gradient across the membrane. The catalytic sites are hosted primarily by the beta subunits. The protein is ATP synthase subunit beta, plastid (atpB) of Cuscuta pentagona (Five-angled dodder).